The chain runs to 417 residues: Glucose-1-phosphatase (417 aa).

Positions 1 to 23 are cleaved as a signal peptide; sequence MKYKVLTLCLSAALFAPIAPTMA. Substrate is bound at residue Arg41. The active-site Nucleophile is the His42. Residues Arg45, Arg118, and Glu220 each contribute to the substrate site. Asp315 functions as the Proton donor in the catalytic mechanism.

The protein belongs to the histidine acid phosphatase family. Homodimer.

It localises to the periplasm. The catalysed reaction is alpha-D-glucose 1-phosphate + H2O = D-glucose + phosphate. The sequence is that of Glucose-1-phosphatase (agp) from Providencia rettgeri.